The following is a 444-amino-acid chain: Phosphoglucosamine mutase (444 aa).

The active-site Phosphoserine intermediate is the S102. 4 residues coordinate Mg(2+): S102, D241, D243, and D245. A Phosphoserine modification is found at S102.

This sequence belongs to the phosphohexose mutase family. It depends on Mg(2+) as a cofactor. In terms of processing, activated by phosphorylation.

The enzyme catalyses alpha-D-glucosamine 1-phosphate = D-glucosamine 6-phosphate. Its function is as follows. Catalyzes the conversion of glucosamine-6-phosphate to glucosamine-1-phosphate. The protein is Phosphoglucosamine mutase of Histophilus somni (strain 2336) (Haemophilus somnus).